Reading from the N-terminus, the 479-residue chain is Adenylate kinase 8 (479 aa).

Adenylate kinase regions lie at residues 58–258 and 269–471; these read PKVV…TYVQ and PKVL…SGII. 67-72 is an ATP binding site; sequence ASGKTT. Residues 87–113 form an NMP 1 region; sequence TKESLLEREFSRLSVEAKSYYQVYKKI. Residues 140–143, Gln-147, and Arg-203 contribute to the AMP site; that span reads GIPE. Residues 177 to 206 are LID 1; sequence GKRIDPVTGEIYHTTFDWPPEPEIQNRLRQ. 278 to 283 serves as a coordination point for ATP; sequence GSGKRL. An NMP 2 region spans residues 298-327; the sequence is SCGQLLKEAVAAKSSFGELIQPFFEKRMTV. AMP-binding positions include 325-327, 354-357, and Gln-361; these read MTV and GFPR. The interval 391–424 is LID 2; sequence LRRTDPVTGERFHLMYKPPPTIEVQVRLLQNPKD. Arg-392 serves as a coordination point for ATP.

It belongs to the adenylate kinase family. As to quaternary structure, interacts with CFAP45 and CFAP52; CFAP45 and AK8 dimerization may create a cavity at the interface of the dimer that can accommodate AMP.

It localises to the cytoplasm. Its subcellular location is the cytosol. It is found in the cytoskeleton. The protein localises to the cilium axoneme. The catalysed reaction is AMP + ATP = 2 ADP. It carries out the reaction a 2'-deoxyribonucleoside 5'-diphosphate + ATP = a 2'-deoxyribonucleoside 5'-triphosphate + ADP. The enzyme catalyses a ribonucleoside 5'-diphosphate + ATP = a ribonucleoside 5'-triphosphate + ADP. In terms of biological role, nucleoside monophosphate (NMP) kinase that catalyzes the reversible transfer of the terminal phosphate group between nucleoside triphosphates and monophosphates. Has highest activity toward AMP, and weaker activity toward dAMP, CMP and dCMP. Also displays broad nucleoside diphosphate kinase activity. The protein is Adenylate kinase 8 (Ak8) of Mus musculus (Mouse).